A 596-amino-acid chain; its full sequence is Inactive metallocarboxypeptidase ecm14 (596 aa).

An N-terminal signal peptide occupies residues 1–26 (MSQSHSILSSLILLVAIIFCVPHVIA). Positions 27 to 190 (VPWTTDGHAQ…SYPSMAYADA (164 aa)) are excised as a propeptide. Asn114 carries N-linked (GlcNAc...) asparagine glycosylation. The region spanning 220–540 (NYQPLSVIIP…NVIKYFGDFL (321 aa)) is the Peptidase M14 domain. The Zn(2+) site is built by His285 and Glu288. Residues 285–288 (HARE), Arg343, and 360–361 (DR) contribute to the substrate site. Cysteines 354 and 376 form a disulfide. N-linked (GlcNAc...) asparagine glycosylation is present at Asn400. His416 contacts Zn(2+). 417 to 418 (SY) provides a ligand contact to substrate.

Belongs to the peptidase M14 family. Zn(2+) is required as a cofactor.

It is found in the vacuole. It localises to the secreted. Inactive carboxypeptidase that may play a role in cell wall organization and biogenesis. In Sclerotinia sclerotiorum (strain ATCC 18683 / 1980 / Ss-1) (White mold), this protein is Inactive metallocarboxypeptidase ecm14 (ecm14).